We begin with the raw amino-acid sequence, 652 residues long: DNA ligase (652 aa).

NAD(+)-binding positions include 29–33 (DSEYD), 78–79 (SL), and Glu107. The active-site N6-AMP-lysine intermediate is the Lys109. Arg130, Glu164, Lys278, and Lys302 together coordinate NAD(+). Zn(2+)-binding residues include Cys395, Cys398, Cys413, and Cys418. A BRCT domain is found at 577 to 652 (DQQAALFGLT…IEDEDWLLNL (76 aa)).

This sequence belongs to the NAD-dependent DNA ligase family. LigA subfamily. It depends on Mg(2+) as a cofactor. Mn(2+) is required as a cofactor.

It catalyses the reaction NAD(+) + (deoxyribonucleotide)n-3'-hydroxyl + 5'-phospho-(deoxyribonucleotide)m = (deoxyribonucleotide)n+m + AMP + beta-nicotinamide D-nucleotide.. DNA ligase that catalyzes the formation of phosphodiester linkages between 5'-phosphoryl and 3'-hydroxyl groups in double-stranded DNA using NAD as a coenzyme and as the energy source for the reaction. It is essential for DNA replication and repair of damaged DNA. In Streptococcus equi subsp. equi (strain 4047), this protein is DNA ligase.